The chain runs to 223 residues: 23 kDa piroplasm membrane protein (223 aa).

The N-terminal stretch at M1–S19 is a signal peptide. Residues G20–Y197 lie on the Extracellular side of the membrane. N69 carries an N-linked (GlcNAc...) asparagine glycan. A helical transmembrane segment spans residues V198–V218. Topologically, residues K219–K223 are cytoplasmic.

It is found in the membrane. This is 23 kDa piroplasm membrane protein from Theileria buffeli.